We begin with the raw amino-acid sequence, 344 residues long: Galactinol synthase 1 (344 aa).

Residue lysine 111 is part of the active site. Mn(2+) is bound by residues aspartate 127, aspartate 129, and histidine 265.

Belongs to the glycosyltransferase 8 family. Galactosyltransferase subfamily. Requires a divalent metal cation as cofactor. As to expression, accumulates in mature seeds. Expressed in seedlings (axes and cotyledons), meristems, vascular tissues and emerging lateral roots. Present in abscission zones.

Its subcellular location is the cytoplasm. It carries out the reaction myo-inositol + UDP-alpha-D-galactose = alpha-D-galactosyl-(1-&gt;3)-1D-myo-inositol + UDP + H(+). Functionally, galactinol synthase involved in the biosynthesis of raffinose family oligosaccharides (RFOs) that function as osmoprotectants. Promotes plant stress tolerance such as heat, chilling, salinity and methylviologen (MV), a superoxide radical generating drug, by mediating raffinose accumulation, an osmoprotective substance. In Arabidopsis thaliana (Mouse-ear cress), this protein is Galactinol synthase 1 (GOLS1).